The chain runs to 276 residues: Shikimate dehydrogenase (NADP(+)) (276 aa).

Residues serine 15–serine 17 and threonine 62 contribute to the shikimate site. Lysine 66 (proton acceptor) is an active-site residue. Glutamate 78 contacts NADP(+). Residues asparagine 87 and aspartate 103 each contribute to the shikimate site. NADP(+) contacts are provided by residues glycine 128–alanine 132 and isoleucine 217. Tyrosine 219 is a binding site for shikimate. NADP(+) is bound at residue glycine 240.

It belongs to the shikimate dehydrogenase family. Homodimer.

The catalysed reaction is shikimate + NADP(+) = 3-dehydroshikimate + NADPH + H(+). Its pathway is metabolic intermediate biosynthesis; chorismate biosynthesis; chorismate from D-erythrose 4-phosphate and phosphoenolpyruvate: step 4/7. In terms of biological role, involved in the biosynthesis of the chorismate, which leads to the biosynthesis of aromatic amino acids. Catalyzes the reversible NADPH linked reduction of 3-dehydroshikimate (DHSA) to yield shikimate (SA). The sequence is that of Shikimate dehydrogenase (NADP(+)) from Lysinibacillus sphaericus (strain C3-41).